The primary structure comprises 1052 residues: P3N-PIPO polyprotein (1052 aa).

One can recognise a Peptidase S30 domain in the interval 219 to 362 (KMSDQGVDML…KTMSLKIVHF (144 aa)). Active-site for P1 proteinase activity residues include H270, D279, and S313. The Involved in interaction with stylet and aphid transmission motif lies at 414-417 (KITC). The Involved in virions binding and aphid transmission signature appears at 672-674 (PTK). The Peptidase C6 domain occupies 698–820 (MYIAKEGYCY…ESSLKHYRVG (123 aa)). Catalysis depends on for helper component proteinase activity residues C706 and H779.

Belongs to the potyviridae P3N-PIPO polyprotein family. As to quaternary structure, interacts (via PIPO domain) with host PCaP1 protein; this interaction may help to anchor the movement complex to the plasma membrane from which the complex could move to the plasmodesmata. Potyviral RNA is expressed as two polyproteins which undergo post-translational proteolytic processing. Genome polyprotein is processed by NIa-pro, P1 and HC-pro proteinases resulting in the production of at least ten individual proteins. P3N-PIPO is cleaved by P1 and HC-pro proteinases resulting in the production of three individual proteins. The P1 proteinase and the HC-pro cleave only their respective C-termini autocatalytically.

It localises to the host cell junction. The protein resides in the host plasmodesma. It carries out the reaction Hydrolyzes a Gly-|-Gly bond at its own C-terminus, commonly in the sequence -Tyr-Xaa-Val-Gly-|-Gly, in the processing of the potyviral polyprotein.. Required for aphid transmission and also has proteolytic activity. Only cleaves a Gly-Gly dipeptide at its own C-terminus. Interacts with virions and aphid stylets. Acts as a suppressor of RNA-mediated gene silencing, also known as post-transcriptional gene silencing (PTGS), a mechanism of plant viral defense that limits the accumulation of viral RNAs. May have RNA-binding activity. In terms of biological role, allows efficient cell to cell propagation, by bypassing the host cell wall barrier. Transports viral genome to neighboring plant cells directly through plasmosdesmata, without any budding. In Turnip mosaic virus (strain Quebec) (TuMV), this protein is P3N-PIPO polyprotein.